A 203-amino-acid polypeptide reads, in one-letter code: MHAGVRGKKERAKFVWPLLGAGLLLAAEGVAWASGGGGEHGGGHLNWSDFLARTLVFVITFSILFKLLKKPIAGFFSSRKAEIQRLLSELELKQKEAEQNHAECKAKLAALEVETKKIVDELIAEGEVERQKIIEAAEKQADYLRQQADVAIQQEIKAAREKLKLEISELSVAAAEEILRKNMKAKDQDRLVRDFMKRVVEAK.

Residues Phe14–Ser34 traverse the membrane as a helical segment.

This sequence belongs to the ATPase B chain family. In terms of assembly, F-type ATPases have 2 components, F(1) - the catalytic core - and F(0) - the membrane proton channel. F(1) has five subunits: alpha(3), beta(3), gamma(1), delta(1), epsilon(1). F(0) has three main subunits: a(1), b(2) and c(10-14). The alpha and beta chains form an alternating ring which encloses part of the gamma chain. F(1) is attached to F(0) by a central stalk formed by the gamma and epsilon chains, while a peripheral stalk is formed by the delta and b chains.

It is found in the cell inner membrane. Its function is as follows. F(1)F(0) ATP synthase produces ATP from ADP in the presence of a proton or sodium gradient. F-type ATPases consist of two structural domains, F(1) containing the extramembraneous catalytic core and F(0) containing the membrane proton channel, linked together by a central stalk and a peripheral stalk. During catalysis, ATP synthesis in the catalytic domain of F(1) is coupled via a rotary mechanism of the central stalk subunits to proton translocation. Component of the F(0) channel, it forms part of the peripheral stalk, linking F(1) to F(0). This chain is ATP synthase subunit b, found in Syntrophobacter fumaroxidans (strain DSM 10017 / MPOB).